The sequence spans 718 residues: Sec-independent protein translocase protein TatCt (718 aa).

8 helical membrane-spanning segments follow: residues 34 to 54 (VFIV…LYVW), 84 to 104 (ILLQ…PPFI), 137 to 157 (LFAA…FAFL), 178 to 198 (FIFL…AMTG), 214 to 231 (WRHA…FTPP), 234 to 254 (FTQI…LYLA), 280 to 300 (LAGV…YGGV), and 325 to 345 (LGAF…AYLV). The interval 421 to 451 (REAEAADAEDEPGELEDRTTRAGGAFVSELT) is disordered. Acidic residues predominate over residues 425 to 434 (AADAEDEPGE). 6 consecutive transmembrane segments (helical) span residues 478–498 (AFWV…WLYT), 539–559 (FSTI…VWPA), 572–592 (TVFV…ALGY), 621–641 (FFWL…VPIL), 661–681 (EVTV…ITTM), and 682–702 (FMVT…LFVL).

Belongs to the TatC family. Forms a complex with TatA.

Its subcellular location is the cell membrane. Functionally, part of the twin-arginine translocation (Tat) system that transports large folded proteins containing a characteristic twin-arginine motif in their signal peptide across membranes. The sequence is that of Sec-independent protein translocase protein TatCt from Haloferax volcanii (strain ATCC 29605 / DSM 3757 / JCM 8879 / NBRC 14742 / NCIMB 2012 / VKM B-1768 / DS2) (Halobacterium volcanii).